The sequence spans 360 residues: 3-dehydroquinate synthase (360 aa).

NAD(+)-binding positions include 72 to 77, 106 to 110, 130 to 131, Lys-143, Lys-152, and 170 to 173; these read DGEEFK, GVVGD, TT, and TLTT. Zn(2+) contacts are provided by Glu-185, His-248, and His-265.

It belongs to the sugar phosphate cyclases superfamily. Dehydroquinate synthase family. It depends on Co(2+) as a cofactor. The cofactor is Zn(2+). NAD(+) is required as a cofactor.

The protein resides in the cytoplasm. The catalysed reaction is 7-phospho-2-dehydro-3-deoxy-D-arabino-heptonate = 3-dehydroquinate + phosphate. It functions in the pathway metabolic intermediate biosynthesis; chorismate biosynthesis; chorismate from D-erythrose 4-phosphate and phosphoenolpyruvate: step 2/7. Its function is as follows. Catalyzes the conversion of 3-deoxy-D-arabino-heptulosonate 7-phosphate (DAHP) to dehydroquinate (DHQ). The sequence is that of 3-dehydroquinate synthase from Geobacter metallireducens (strain ATCC 53774 / DSM 7210 / GS-15).